A 104-amino-acid chain; its full sequence is Complex III assembly factor LYRM7 (104 aa).

Serine 60 is modified (phosphoserine).

This sequence belongs to the complex I LYR family. As to quaternary structure, interacts with UQCRFS1.

It localises to the mitochondrion matrix. In terms of biological role, assembly factor required for Rieske Fe-S protein UQCRFS1 incorporation into the cytochrome b-c1 (CIII) complex. Functions as a chaperone, binding to this subunit within the mitochondrial matrix and stabilizing it prior to its translocation and insertion into the late CIII dimeric intermediate within the mitochondrial inner membrane. The chain is Complex III assembly factor LYRM7 (Lyrm7) from Mus musculus (Mouse).